Consider the following 141-residue polypeptide: Large ribosomal subunit protein uL11 (141 aa).

It belongs to the universal ribosomal protein uL11 family. Part of the ribosomal stalk of the 50S ribosomal subunit. Interacts with L10 and the large rRNA to form the base of the stalk. L10 forms an elongated spine to which L12 dimers bind in a sequential fashion forming a multimeric L10(L12)X complex. In terms of processing, one or more lysine residues are methylated.

Functionally, forms part of the ribosomal stalk which helps the ribosome interact with GTP-bound translation factors. The chain is Large ribosomal subunit protein uL11 from Campylobacter jejuni subsp. jejuni serotype O:6 (strain 81116 / NCTC 11828).